The primary structure comprises 122 residues: Large ribosomal subunit protein uL14 (122 aa).

It belongs to the universal ribosomal protein uL14 family. In terms of assembly, part of the 50S ribosomal subunit. Forms a cluster with proteins L3 and L19. In the 70S ribosome, L14 and L19 interact and together make contacts with the 16S rRNA in bridges B5 and B8.

Functionally, binds to 23S rRNA. Forms part of two intersubunit bridges in the 70S ribosome. This Acetivibrio thermocellus (strain ATCC 27405 / DSM 1237 / JCM 9322 / NBRC 103400 / NCIMB 10682 / NRRL B-4536 / VPI 7372) (Clostridium thermocellum) protein is Large ribosomal subunit protein uL14.